The sequence spans 743 residues: Cap-specific mRNA (nucleoside-2'-O-)-methyltransferase 2 (743 aa).

The Adrift-type SAM-dependent 2'-O-MTase domain maps to 113–326 (ELCTQAWAKF…LYIVCLDYQA (214 aa)). Lysine 121 is an active-site residue. Positions 152, 171, and 239 each coordinate S-adenosyl-L-methionine. Aspartate 239 is a catalytic residue. The Proton acceptor role is filled by lysine 279.

The protein localises to the nucleus. The protein resides in the cytoplasm. The catalysed reaction is a 5'-end (N(7)-methyl 5'-triphosphoguanosine)-(2'-O-methyl-ribonucleoside)-(ribonucleotide) in mRNA + S-adenosyl-L-methionine = a 5'-end (N(7)-methyl 5'-triphosphoguanosine)-(2'-O-methyl-ribonucleoside)-(2'-O-methyl-ribonucleotide) in mRNA + S-adenosyl-L-homocysteine + H(+). S-adenosyl-L-methionine-dependent methyltransferase that mediates mRNA cap2 2'-O-ribose methylation to the 5'-cap structure of mRNAs. Methylates the ribose of the second nucleotide of a m(7)GpppG-capped mRNA and small nuclear RNA (snRNA) (cap0) to produce m(7)GpppRmpNm (cap2). The polypeptide is Cap-specific mRNA (nucleoside-2'-O-)-methyltransferase 2 (cmtr2) (Danio rerio (Zebrafish)).